Reading from the N-terminus, the 458-residue chain is MTQNTQLTIIGGGMAGSEAAWQAANLGVNVRLIEMRPKVETFAHRTGNLAEMVCSNSFRSDDSEQNAVGLLHWEMRAANSVIMHTADSHKLPAGGALAVDRDPFAEAVTAKLHAHPNIEITYGEVTDLPAAGPTIIATGPLTGSALADAIAREAGQDALAFFDAIAPIVYADSIDMDIAWRQSRYDKGDTLEEQQAYINCPLTRDQYEAFIDALLSADKTQFKDGETAGYFDGCLPIEVMAERGRETLRFGPMKPVGLTNPHDPQTKAYAVVQLRRDNALGTLYNIVGFQTKMTYGAQKQVFAMIPGLQEASFARLGGIHRNTFINSPTLLDDQMRLRSKPHIRFAGQITGVEGYVESASMGLLAGRMAAAEILGETLPDLPDTTAMGALVTHITGGADAKTFQPMNVNFGLFPPVEGLKGGRRGRKDRYKAYTDRAKAAWTNWLTPQTSLGGSQAAE.

FAD is bound at residue 11-16 (GGGMAG).

It belongs to the MnmG family. TrmFO subfamily. FAD is required as a cofactor.

Its subcellular location is the cytoplasm. The enzyme catalyses uridine(54) in tRNA + (6R)-5,10-methylene-5,6,7,8-tetrahydrofolate + NADH + H(+) = 5-methyluridine(54) in tRNA + (6S)-5,6,7,8-tetrahydrofolate + NAD(+). The catalysed reaction is uridine(54) in tRNA + (6R)-5,10-methylene-5,6,7,8-tetrahydrofolate + NADPH + H(+) = 5-methyluridine(54) in tRNA + (6S)-5,6,7,8-tetrahydrofolate + NADP(+). Catalyzes the folate-dependent formation of 5-methyl-uridine at position 54 (M-5-U54) in all tRNAs. In Jannaschia sp. (strain CCS1), this protein is Methylenetetrahydrofolate--tRNA-(uracil-5-)-methyltransferase TrmFO.